A 95-amino-acid polypeptide reads, in one-letter code: Co-chaperonin GroES (95 aa).

The protein belongs to the GroES chaperonin family. Heptamer of 7 subunits arranged in a ring. Interacts with the chaperonin GroEL.

It is found in the cytoplasm. Functionally, together with the chaperonin GroEL, plays an essential role in assisting protein folding. The GroEL-GroES system forms a nano-cage that allows encapsulation of the non-native substrate proteins and provides a physical environment optimized to promote and accelerate protein folding. GroES binds to the apical surface of the GroEL ring, thereby capping the opening of the GroEL channel. This Chlorobium limicola (strain DSM 245 / NBRC 103803 / 6330) protein is Co-chaperonin GroES.